Reading from the N-terminus, the 232-residue chain is Ribose-5-phosphate isomerase A (232 aa).

Substrate is bound by residues 31 to 34 (TGST), 88 to 91 (DGAD), and 101 to 104 (KGGG). The Proton acceptor role is filled by Glu-110. Lys-128 lines the substrate pocket.

It belongs to the ribose 5-phosphate isomerase family. Homodimer.

It catalyses the reaction aldehydo-D-ribose 5-phosphate = D-ribulose 5-phosphate. It functions in the pathway carbohydrate degradation; pentose phosphate pathway; D-ribose 5-phosphate from D-ribulose 5-phosphate (non-oxidative stage): step 1/1. In terms of biological role, catalyzes the reversible conversion of ribose-5-phosphate to ribulose 5-phosphate. The polypeptide is Ribose-5-phosphate isomerase A (Lactobacillus gasseri (strain ATCC 33323 / DSM 20243 / BCRC 14619 / CIP 102991 / JCM 1131 / KCTC 3163 / NCIMB 11718 / NCTC 13722 / AM63)).